The following is a 483-amino-acid chain: Serine protease HTRA4 (483 aa).

An N-terminal signal peptide occupies residues 1 to 30; it reads MSFQRLWAVRTQFLLLWLLLPAVPVPWAEA. One can recognise an IGFBP N-terminal domain in the interval 35–113; sequence VSLPCPDACD…GAWLGTCGCA (79 aa). 6 cysteine pairs are disulfide-bonded: C39/C65, C43/C67, C48/C68, C54/C71, C79/C93, and C87/C110. Residues 208–368 form a serine protease region; it reads GSGFIVSEDG…IPSDRIRQFL (161 aa). Active-site charge relay system residues include H224, D254, and S332. One can recognise a PDZ domain in the interval 379-471; the sequence is KAPLQKKYLG…LSIIVLRGSQ (93 aa).

It belongs to the peptidase S1C family.

It is found in the secreted. Its function is as follows. Serine protease. In Mus musculus (Mouse), this protein is Serine protease HTRA4 (Htra4).